Consider the following 326-residue polypeptide: Beta-ketoacyl-[acyl-carrier-protein] synthase III (326 aa).

Residues Cys112 and His251 contribute to the active site. Positions 252 to 256 (QANSR) are ACP-binding. Asn281 is an active-site residue.

It belongs to the thiolase-like superfamily. FabH family. As to quaternary structure, homodimer.

The protein resides in the cytoplasm. It carries out the reaction malonyl-[ACP] + acetyl-CoA + H(+) = 3-oxobutanoyl-[ACP] + CO2 + CoA. Its pathway is lipid metabolism; fatty acid biosynthesis. Its function is as follows. Catalyzes the condensation reaction of fatty acid synthesis by the addition to an acyl acceptor of two carbons from malonyl-ACP. Catalyzes the first condensation reaction which initiates fatty acid synthesis and may therefore play a role in governing the total rate of fatty acid production. Possesses both acetoacetyl-ACP synthase and acetyl transacylase activities. Its substrate specificity determines the biosynthesis of branched-chain and/or straight-chain of fatty acids. This Clostridium botulinum (strain ATCC 19397 / Type A) protein is Beta-ketoacyl-[acyl-carrier-protein] synthase III.